The following is a 206-amino-acid chain: Sclerostin domain-containing protein 1 (206 aa).

Residues 1–23 form the signal peptide; sequence MLPPAIHLSLIPLLCILMKNCLA. The tract at residues 42-62 is disordered; sequence AHPSSNSTLNQARNGGRHFSS. Residues 43–62 show a composition bias toward polar residues; sequence HPSSNSTLNQARNGGRHFSS. The N-linked (GlcNAc...) asparagine glycan is linked to Asn47. Cystine bridges form between Cys75–Cys133, Cys89–Cys147, Cys100–Cys163, and Cys104–Cys165. The CTCK domain maps to 75–170; it reads CRELRSTKYI…TACKCKRYTR (96 aa). The N-linked (GlcNAc...) asparagine glycan is linked to Asn173. The interval 176–206 is disordered; the sequence is SHNFESVSPAKPAQHHRERKRASKSSKHSLS. A compositionally biased stretch (basic residues) spans 188–206; it reads AQHHRERKRASKSSKHSLS.

It belongs to the sclerostin family. Interacts with BMP2, BMP4, BMP6 and BMP7 with high affinity. In terms of tissue distribution, highly expressed within the maximally sensitized/receptive endometrium. Weakly expressed in brain, kidney and the female reproductive tract. Expressed in the dermal papilla (DP) and at high level in the precortex of both anagen vibrissae and pelage follicles. Dynymic expression during the hair cycle.

The protein resides in the secreted. Its function is as follows. Directly antagonizes activity of BMP2, BMP4, BMP6 and BMP7 in a dose-dependent manner. May be involved in the onset of endometrial receptivity for implantation/sensitization for the decidual cell reaction. Enhances Wnt signaling and inhibits TGF-beta signaling. The chain is Sclerostin domain-containing protein 1 (Sostdc1) from Rattus norvegicus (Rat).